A 348-amino-acid chain; its full sequence is 4-hydroxy-3-methylbut-2-en-1-yl diphosphate synthase (flavodoxin) (348 aa).

4 residues coordinate [4Fe-4S] cluster: C263, C266, C298, and E305.

It belongs to the IspG family. [4Fe-4S] cluster serves as cofactor.

The catalysed reaction is (2E)-4-hydroxy-3-methylbut-2-enyl diphosphate + oxidized [flavodoxin] + H2O + 2 H(+) = 2-C-methyl-D-erythritol 2,4-cyclic diphosphate + reduced [flavodoxin]. It participates in isoprenoid biosynthesis; isopentenyl diphosphate biosynthesis via DXP pathway; isopentenyl diphosphate from 1-deoxy-D-xylulose 5-phosphate: step 5/6. Its function is as follows. Converts 2C-methyl-D-erythritol 2,4-cyclodiphosphate (ME-2,4cPP) into 1-hydroxy-2-methyl-2-(E)-butenyl 4-diphosphate. The sequence is that of 4-hydroxy-3-methylbut-2-en-1-yl diphosphate synthase (flavodoxin) from Dehalococcoides mccartyi (strain CBDB1).